A 258-amino-acid chain; its full sequence is Synapse differentiation-inducing gene protein 1-like (258 aa).

The Extracellular segment spans residues 1–182 (MESLSELQNP…FIVIPPRDHL (182 aa)). Residues 183-203 (GLAIFSMLCCFWPLGIAAFYF) traverse the membrane as a helical segment. Residues 204 to 228 (SQGTSKAVTKGDFPLASIASRRALF) are Cytoplasmic-facing. The chain crosses the membrane as a helical span at residues 229-249 (LAALSITIGTGVYVGVVVALI). Over 250 to 258 (AYLSKPGHI) the chain is Extracellular.

This sequence belongs to the CD225/Dispanin family.

Its subcellular location is the membrane. The protein localises to the golgi apparatus. It is found in the cis-Golgi network. The sequence is that of Synapse differentiation-inducing gene protein 1-like (syndig1l) from Danio rerio (Zebrafish).